We begin with the raw amino-acid sequence, 348 residues long: NADH-ubiquinone oxidoreductase chain 2 (348 aa).

11 consecutive transmembrane segments (helical) span residues 1-21, 25-45, 60-80, 99-119, 124-144, 151-171, 178-197, 202-224, 239-259, 274-294, and 326-346; these read MNPY…TLTF, HWIL…PLMA, FLIQ…NAWI, MFAL…PEVL, LLTG…LIIQ, PLIL…SGLN, ILAY…IQYA, LIAL…VLSA, ILAA…PLTG, DLPA…FFYL, and LTIS…ILML.

It belongs to the complex I subunit 2 family. Core subunit of respiratory chain NADH dehydrogenase (Complex I) which is composed of 45 different subunits.

Its subcellular location is the mitochondrion inner membrane. It carries out the reaction a ubiquinone + NADH + 5 H(+)(in) = a ubiquinol + NAD(+) + 4 H(+)(out). Its function is as follows. Core subunit of the mitochondrial membrane respiratory chain NADH dehydrogenase (Complex I) which catalyzes electron transfer from NADH through the respiratory chain, using ubiquinone as an electron acceptor. Essential for the catalytic activity and assembly of complex I. This is NADH-ubiquinone oxidoreductase chain 2 (mt-nd2) from Danio rerio (Zebrafish).